We begin with the raw amino-acid sequence, 329 residues long: Ribonucleoside-diphosphate reductase subunit beta (329 aa).

The Fe cation site is built by Asp-66, Glu-97, and His-101. Tyr-105 is an active-site residue. Fe cation-binding residues include Glu-164, Glu-198, and His-201.

The protein belongs to the ribonucleoside diphosphate reductase small chain family. In terms of assembly, tetramer of two alpha and two beta subunits. Fe cation is required as a cofactor.

The catalysed reaction is a 2'-deoxyribonucleoside 5'-diphosphate + [thioredoxin]-disulfide + H2O = a ribonucleoside 5'-diphosphate + [thioredoxin]-dithiol. Provides the precursors necessary for DNA synthesis. Catalyzes the biosynthesis of deoxyribonucleotides from the corresponding ribonucleotides. The polypeptide is Ribonucleoside-diphosphate reductase subunit beta (nrdF) (Bacillus subtilis (strain 168)).